The primary structure comprises 123 residues: Large ribosomal subunit protein uL29 (123 aa).

Belongs to the universal ribosomal protein uL29 family.

This chain is Large ribosomal subunit protein uL29 (rpl-35), found in Caenorhabditis elegans.